The primary structure comprises 357 residues: Probable butyrate kinase (357 aa).

Belongs to the acetokinase family.

It is found in the cytoplasm. The enzyme catalyses butanoate + ATP = butanoyl phosphate + ADP. The polypeptide is Probable butyrate kinase (Thermotoga petrophila (strain ATCC BAA-488 / DSM 13995 / JCM 10881 / RKU-1)).